The chain runs to 344 residues: L-rhamnose-proton symporter (344 aa).

The next 10 membrane-spanning stretches (helical) occupy residues 4 to 24 (AIILGIIWHLVGAASAACFYA), 38 to 58 (WSIGGLVSWLILPWTVSYLLL), 68 to 88 (FSIATLLPVFLFGAMWGIGNI), 101 to 121 (MGIGIAIGITLIIGTLMTPIL), 137 to 157 (TLLGVFVALIGVAIVSYAGLL), 175 to 195 (LILAVMCGIFSAGMSFAMDAA), 207 to 227 (INSLYVALPSYVIIMGGGAII), 259 to 279 (ILFSALAGLMWYLQFFFYAWG), 290 to 310 (MSWMLHMSFYVLCGGIVGLLL), and 321 to 341 (VAVLCIGCLVIILAANIVGLG).

The protein belongs to the L-rhamnose transporter (TC 2.A.7.6) family.

It is found in the cell inner membrane. The catalysed reaction is L-rhamnopyranose(in) + H(+)(in) = L-rhamnopyranose(out) + H(+)(out). In terms of biological role, uptake of L-rhamnose across the cytoplasmic membrane with the concomitant transport of protons into the cell (symport system). The polypeptide is L-rhamnose-proton symporter (Yersinia pseudotuberculosis serotype O:1b (strain IP 31758)).